Consider the following 614-residue polypeptide: Nuclear receptor subfamily 1 group D member 1 (614 aa).

Positions 1 to 12 (MTTLDSNNNTGG) are enriched in polar residues. The interval 1–70 (MTTLDSNNNT…TQDPARSFGS (70 aa)) is required for phosphorylation by CSNK1E and cytoplasmic localization. The disordered stretch occupies residues 1 to 119 (MTTLDSNNNT…SSRVSPSKST (119 aa)). Residues 1-128 (MTTLDSNNNT…TSNITKLNGM (128 aa)) form a modulating region. Positions 14 to 34 (ITYIGSSGSSPSRTSPESLYS) are enriched in low complexity. The span at 35–48 (DNSNGSFQSLTQGC) shows a compositional bias: polar residues. A crucial for activation of GJA1 region spans residues 49–284 (PTYFPPSPTG…PPRSPSPEPT (236 aa)). Phosphoserine; by GSK3-beta occurs at positions 55 and 59. Residues 69–102 (GSIPPSLSDDGSPSSSSSSSSSSSSFYNGSPPGS) are compositionally biased toward low complexity. Positions 129 to 205 (VLLCKVCGDV…VGMSRDAVRF (77 aa)) form a DNA-binding region, nuclear receptor. 2 NR C4-type zinc fingers span residues 132 to 152 (CKVC…CEGC) and 169 to 193 (CLKN…FKKC). Residues lysine 191 and lysine 192 each carry the N6-acetyllysine; by KAT5 modification. The segment covering 233 to 243 (SQCPLETSPTQ) has biased composition (polar residues). Disordered stretches follow at residues 233–285 (SQCP…EPTV) and 311–345 (PGNF…DNNT). The segment covering 244–261 (HPTPGPMGPSPPPAPVPS) has biased composition (pro residues). At threonine 274 the chain carries Phosphothreonine; by CDK1. One can recognise an NR LBD domain in the interval 284-614 (TVEDVISQVA…KLLSFRVDAQ (331 aa)). The span at 311–324 (PGNFNANHASGSPP) shows a compositional bias: polar residues. The residue at position 400 (lysine 400) is an N6-acetyllysine. Position 418 (cysteine 418) interacts with heme. Lysine 591 is modified (N6-acetyllysine). Histidine 602 is a binding site for heme.

It belongs to the nuclear hormone receptor family. NR1 subfamily. As to quaternary structure, binds DNA as a monomer or a homodimer. Interacts with C1D, NR2E3 and SP1. Interacts with OPHN1 (via C-terminus). Interacts with ZNHIT1. Interacts with PER2; the interaction associates PER2 to BMAL1 promoter region. Interacts with CRY1. Interacts with CCAR2. Interacts with SIAH2. Interacts with CDK1. Interacts with FBXW7. Interacts with HUWE1. Interacts with NR0B2. Interacts with NFIL3. Interacts (via domain NR LBD) with HSP90AA1 and HSP90AB1. In terms of processing, ubiquitinated, leading to its proteasomal degradation. Ubiquitinated by SIAH2; leading to its proteasomal degradation. Ubiquitinated by the SCF(FBXW7) complex when phosphorylated by CDK1 leading to its proteasomal degradation. Rapidly ubiquitinated in response to inflammatory triggers and sumoylation is a prerequisite to its ubiquitination. Sumoylated by UBE2I, desumoylated by SENP1, and sumoylation is a prerequisite to its ubiquitination. Post-translationally, phosphorylated by CSNK1E; phosphorylation enhances its cytoplasmic localization. In terms of processing, undergoes lysosome-mediated degradation in a time-dependent manner in the liver. As to expression, widely expressed. Expressed at high levels in the liver, adipose tissue, skeletal muscle and brain. Also expressed in endothelial cells (ECs), vascular smooth muscle cells (VSMCs) and macrophages. Expression oscillates diurnally in the suprachiasmatic nucleus (SCN) of the hypothalamus as well as in peripheral tissues. Expression increases during the differentiation of pre-adipocytes into mature adipocytes. Expressed at high levels in some squamous carcinoma cell lines.

The protein localises to the nucleus. It is found in the cytoplasm. The protein resides in the cell projection. It localises to the dendrite. Its subcellular location is the dendritic spine. Its function is as follows. Transcriptional repressor which coordinates circadian rhythm and metabolic pathways in a heme-dependent manner. Integral component of the complex transcription machinery that governs circadian rhythmicity and forms a critical negative limb of the circadian clock by directly repressing the expression of core clock components BMAL1, CLOCK and CRY1. Also regulates genes involved in metabolic functions, including lipid and bile acid metabolism, adipogenesis, gluconeogenesis and the macrophage inflammatory response. Acts as a receptor for heme which stimulates its interaction with the NCOR1/HDAC3 corepressor complex, enhancing transcriptional repression. Recognizes two classes of DNA response elements within the promoter of its target genes and can bind to DNA as either monomers or homodimers, depending on the nature of the response element. Binds as a monomer to a response element composed of the consensus half-site motif 5'-[A/G]GGTCA-3' preceded by an A/T-rich 5' sequence (RevRE), or as a homodimer to a direct repeat of the core motif spaced by two nucleotides (RevDR-2). Acts as a potent competitive repressor of ROR alpha (RORA) function and regulates the levels of its ligand heme by repressing the expression of PPARGC1A, a potent inducer of heme synthesis. Regulates lipid metabolism by repressing the expression of APOC3 and by influencing the activity of sterol response element binding proteins (SREBPs); represses INSIG2 which interferes with the proteolytic activation of SREBPs which in turn govern the rhythmic expression of enzymes with key functions in sterol and fatty acid synthesis. Regulates gluconeogenesis via repression of G6PC1 and PEPCK and adipocyte differentiation via repression of PPARG. Regulates glucagon release in pancreatic alpha-cells via the AMPK-NAMPT-SIRT1 pathway and the proliferation, glucose-induced insulin secretion and expression of key lipogenic genes in pancreatic-beta cells. Positively regulates bile acid synthesis by increasing hepatic expression of CYP7A1 via repression of NR0B2 and NFIL3 which are negative regulators of CYP7A1. Modulates skeletal muscle oxidative capacity by regulating mitochondrial biogenesis and autophagy; controls mitochondrial biogenesis and respiration by interfering with the STK11-PRKAA1/2-SIRT1-PPARGC1A signaling pathway. Represses the expression of SERPINE1/PAI1, an important modulator of cardiovascular disease and the expression of inflammatory cytokines and chemokines in macrophages. Represses gene expression at a distance in macrophages by inhibiting the transcription of enhancer-derived RNAs (eRNAs). Plays a role in the circadian regulation of body temperature and negatively regulates thermogenic transcriptional programs in brown adipose tissue (BAT); imposes a circadian oscillation in BAT activity, increasing body temperature when awake and depressing thermogenesis during sleep. In concert with NR2E3, regulates transcriptional networks critical for photoreceptor development and function. In addition to its activity as a repressor, can also act as a transcriptional activator. In the ovarian granulosa cells acts as a transcriptional activator of STAR which plays a role in steroid biosynthesis. In collaboration with SP1, activates GJA1 transcription in a heme-independent manner. Represses the transcription of CYP2B10, CYP4A10 and CYP4A14. Represses the transcription of CES2. Represses and regulates the circadian expression of TSHB in a NCOR1-dependent manner. Negatively regulates the protein stability of NR3C1 and influences the time-dependent subcellular distribution of NR3C1, thereby affecting its transcriptional regulatory activity. Plays a critical role in the circadian control of neutrophilic inflammation in the lung; under resting, non-stress conditions, acts as a rhythmic repressor to limit inflammatory activity whereas in the presence of inflammatory triggers undergoes ubiquitin-mediated degradation thereby relieving inhibition of the inflammatory response. Plays a key role in the circadian regulation of microglial activation and neuroinflammation; suppresses microglial activation through the NF-kappaB pathway in the central nervous system. Plays a role in the regulation of the diurnal rhythms of lipid and protein metabolism in the skeletal muscle via transcriptional repression of genes controlling lipid and amino acid metabolism in the muscle. This is Nuclear receptor subfamily 1 group D member 1 (NR1D1) from Homo sapiens (Human).